An 87-amino-acid chain; its full sequence is MSILSALTSISNPMKSTKSSVANGGGRLSMGTNSVACGSCGGGNSSSGTINNADGSQTTYYSYTSPVYTYNYSYSYSSSGSSSCGCH.

Over residues 1 to 22 the composition is skewed to polar residues; that stretch reads MSILSALTSISNPMKSTKSSVA. Residues 1–23 form a disordered region; sequence MSILSALTSISNPMKSTKSSVAN.

This sequence belongs to the hssA/B family.

This Dictyostelium discoideum (Social amoeba) protein is HssA/B-like protein 7 (hssl7).